A 541-amino-acid polypeptide reads, in one-letter code: Capsid protein VP1 (541 aa).

A shell domain region spans residues 1–224 (MRMSDGAAPK…FVYLTPPIER (224 aa)). The tract at residues 225 to 277 (TIYRMVDLPVIQPRLCTHARWPAPVYGLLVDPSLPSNPQWQNGRVHVDGTLLG) is P1 sub-domain 1. The interval 225–541 (TIYRMVDLPV…SLATGRMLKQ (317 aa)) is protruding domain. The interval 278–416 (TTPISGSWVS…EYNDGLLVPL (139 aa)) is P2 sub-domain. The interaction with host receptor CD300LF stretch occupies residues 298-366 (QSGTGEVATF…MILGPTTNAD (69 aa)). Residues 417 to 541 (APPIGPFLPG…SLATGRMLKQ (125 aa)) form a P1 sub-domain 2 region.

This sequence belongs to the caliciviridae capsid protein family. Homodimer. Homomultimer. Interacts with the minor capsid protein VP2. Interacts (via P2 subdomain) with host receptor CD300LF (via N-terminus); this interaction requires Mg(2+) and Ca(2+), and allows viral binding and entry into the host cell. Stochioimetry is 2:2. Bile acids interact with the P domain dimer interface and act as cofactors enhancing virus binding and infectivity. Interacts with host receptor CD300LD; this interaction allows viral binding and entry into the host cell.

Its subcellular location is the virion. The protein resides in the host cytoplasm. In terms of biological role, capsid protein self assembles to form an icosahedral capsid with a T=3 symmetry, about 38 nm in diameter, and consisting of 180 capsid proteins. A smaller form of capsid with a diameter of 23 nm might be capsid proteins assembled as icosahedron with T=1 symmetry. The capsid encapsulates the genomic RNA and is decorated with VP2 proteins. Mediates virion attachment to the host cell receptor CD300LF. The protein is Capsid protein VP1 of Norovirus (isolate Mouse/NoV/United States/MNV1/2002/GV) (MNV-1).